Reading from the N-terminus, the 147-residue chain is UPF0306 protein YhbP (147 aa).

The protein belongs to the UPF0306 family.

This Salmonella paratyphi A (strain AKU_12601) protein is UPF0306 protein YhbP.